The sequence spans 90 residues: Probable Fe(2+)-trafficking protein (90 aa).

It belongs to the Fe(2+)-trafficking protein family.

Its function is as follows. Could be a mediator in iron transactions between iron acquisition and iron-requiring processes, such as synthesis and/or repair of Fe-S clusters in biosynthetic enzymes. The chain is Probable Fe(2+)-trafficking protein from Chromohalobacter salexigens (strain ATCC BAA-138 / DSM 3043 / CIP 106854 / NCIMB 13768 / 1H11).